The following is a 123-amino-acid chain: Thioredoxin domain-containing protein 17 (123 aa).

Positions 41–123 constitute a Thioredoxin domain; it reads SWCPDCVTAE…DLVRMMFTED (83 aa). Active-site nucleophile residues include cysteine 43 and cysteine 46. Cysteine 43 and cysteine 46 are disulfide-bonded.

The protein belongs to the thioredoxin family. Predominantly expressed in liver, brain and muscle. Also expressed in kidney, intestine, skin, stomach, gill and head kidney.

The protein resides in the cytoplasm. Disulfide reductase. May participate in various redox reactions through the reversible oxidation of its active center dithiol to a disulfide and catalyze dithiol-disulfide exchange reactions. Has peroxidase activity and may contribute to the elimination of cellular hydrogen peroxide. May function as an antioxidant involved in response to viral infection. The polypeptide is Thioredoxin domain-containing protein 17 (Epinephelus coioides (Orange-spotted grouper)).